A 72-amino-acid chain; its full sequence is Subtilisin-chymotrypsin inhibitor-2B (72 aa).

Belongs to the protease inhibitor I13 (potato type I serine protease inhibitor) family.

Its function is as follows. Inhibits both subtilisin and chymotrypsin. This Hordeum vulgare (Barley) protein is Subtilisin-chymotrypsin inhibitor-2B.